A 263-amino-acid polypeptide reads, in one-letter code: Proteasome subunit beta type-5 (263 aa).

The propeptide at 1–59 is removed in mature form; sequence MALASVLERPLPVNQRGFFGLGGRADLLDLGPGSLSDGLSLAAPGWGVPEEPGIEMLHG. Threonine 60 acts as the Nucleophile in catalysis. Residue alanine 108 participates in bortezomib binding.

This sequence belongs to the peptidase T1B family. The 26S proteasome consists of a 20S proteasome core and two 19S regulatory subunits. The 20S proteasome core is a barrel-shaped complex made of 28 subunits that are arranged in four stacked rings. The two outer rings are each formed by seven alpha subunits, and the two inner rings are formed by seven beta subunits. The proteolytic activity is exerted by three beta-subunits PSMB5, PSMB6 and PSMB7. Directly interacts with POMP. Interacts with ABCB1 and TAP1. In terms of assembly, (Microbial infection) Interacts with HIV-1 TAT protein.

It is found in the cytoplasm. The protein resides in the nucleus. The catalysed reaction is Cleavage of peptide bonds with very broad specificity.. Component of the 20S core proteasome complex involved in the proteolytic degradation of most intracellular proteins. This complex plays numerous essential roles within the cell by associating with different regulatory particles. Associated with two 19S regulatory particles, forms the 26S proteasome and thus participates in the ATP-dependent degradation of ubiquitinated proteins. The 26S proteasome plays a key role in the maintenance of protein homeostasis by removing misfolded or damaged proteins that could impair cellular functions, and by removing proteins whose functions are no longer required. Associated with the PA200 or PA28, the 20S proteasome mediates ubiquitin-independent protein degradation. This type of proteolysis is required in several pathways including spermatogenesis (20S-PA200 complex) or generation of a subset of MHC class I-presented antigenic peptides (20S-PA28 complex). Within the 20S core complex, PSMB5 displays a chymotrypsin-like activity. The polypeptide is Proteasome subunit beta type-5 (Homo sapiens (Human)).